A 94-amino-acid polypeptide reads, in one-letter code: uncharacterized protein (94 aa).

A signal peptide spans 1-22 (MIMKNCLLLGALLMGFTGVAMA).

This is an uncharacterized protein from Escherichia coli (strain K12).